The primary structure comprises 957 residues: Serine-aspartate repeat-containing protein C (957 aa).

The N-terminal stretch at Met-1–Ala-50 is a signal peptide. The segment at Ala-51–Arg-166 is disordered. The tract at residues Ala-51 to Lys-495 is ligand binding A region. Over residues Gly-56 to Asn-71 the composition is skewed to polar residues. Positions Lys-72–Lys-83 are enriched in basic and acidic residues. Residues Asp-84 to Pro-114 show a composition bias toward polar residues. Low complexity predominate over residues Gln-115–Asn-132. Residues Asp-133–Lys-164 are compositionally biased toward polar residues. CNA-B domains follow at residues Lys-496–Pro-606 and Lys-607–Thr-717. The segment at Thr-678 to Gly-937 is disordered. 2 stretches are compositionally biased toward acidic residues: residues Thr-685 to Glu-695 and Tyr-712 to Ser-896. The short motif at Leu-920–Gly-924 is the LPXTG sorting signal element. Residues Glu-922–Gly-937 are compositionally biased toward low complexity. Thr-923 bears the Pentaglycyl murein peptidoglycan amidated threonine mark. Residues Gly-924–Lys-957 constitute a propeptide, removed by sortase.

The protein belongs to the serine-aspartate repeat-containing protein (SDr) family. As to quaternary structure, homodimerizes; via N2-Domain. Interacts with host NRXN1; this interaction mediates bacterial attachment to host cells.

The protein localises to the secreted. Its subcellular location is the cell wall. In terms of biological role, cell surface-associated calcium-binding protein which plays an important role in adhesion and pathogenesis. Mediates interactions with components of the extracellular matrix such as host NRXN1 to promote bacterial adhesion. This Staphylococcus aureus (strain MSSA476) protein is Serine-aspartate repeat-containing protein C (sdrC).